A 241-amino-acid chain; its full sequence is Small ribosomal subunit protein eS4 (241 aa).

In terms of domain architecture, S4 RNA-binding spans 43–105; that stretch reads IPLVMVLRDI…INKTFRVLQD (63 aa).

Belongs to the eukaryotic ribosomal protein eS4 family.

This chain is Small ribosomal subunit protein eS4, found in Methanosphaera stadtmanae (strain ATCC 43021 / DSM 3091 / JCM 11832 / MCB-3).